A 222-amino-acid chain; its full sequence is GTP cyclohydrolase 1 (222 aa).

Zn(2+) contacts are provided by Cys111, His114, and Cys182.

This sequence belongs to the GTP cyclohydrolase I family. As to quaternary structure, homomer.

The enzyme catalyses GTP + H2O = 7,8-dihydroneopterin 3'-triphosphate + formate + H(+). It participates in cofactor biosynthesis; 7,8-dihydroneopterin triphosphate biosynthesis; 7,8-dihydroneopterin triphosphate from GTP: step 1/1. The sequence is that of GTP cyclohydrolase 1 from Shigella boydii serotype 18 (strain CDC 3083-94 / BS512).